The following is a 144-amino-acid chain: Large ribosomal subunit protein uL15 (144 aa).

The interval 1–57 is disordered; the sequence is MQLNDLRSAPGARREKHRPGRGIGSGLGKTGGRGHKGLTSRSGGKVAPGFEGGQQPL. Over residues 21–31 the composition is skewed to gly residues; it reads RGIGSGLGKTG.

The protein belongs to the universal ribosomal protein uL15 family. As to quaternary structure, part of the 50S ribosomal subunit.

Its function is as follows. Binds to the 23S rRNA. The protein is Large ribosomal subunit protein uL15 of Pseudomonas aeruginosa (strain LESB58).